The sequence spans 609 residues: UvrABC system protein C (609 aa).

Positions 15 to 92 constitute a GIY-YIG domain; the sequence is TGSGVYQMQD…IKQFRPRYNV (78 aa). Positions 202–237 constitute a UVR domain; that stretch reads DQVIIKLTERMEVASENLVFEEAAHYRDQIRQLRRL.

The protein belongs to the UvrC family. Interacts with UvrB in an incision complex.

The protein resides in the cytoplasm. In terms of biological role, the UvrABC repair system catalyzes the recognition and processing of DNA lesions. UvrC both incises the 5' and 3' sides of the lesion. The N-terminal half is responsible for the 3' incision and the C-terminal half is responsible for the 5' incision. The protein is UvrABC system protein C of Coxiella burnetii (strain CbuK_Q154) (Coxiella burnetii (strain Q154)).